We begin with the raw amino-acid sequence, 348 residues long: MHSVFSYLNESLILFLVTVMGFAFLVGIFLGKPVIHWLKKQNYYDQVQKEHCAKLETLHKDKKYTPTAGGVLFFLVLLMSIFFLLPLRKPSTWLFVFSIVSWGSLGWYDDIVKKKRKKGHGITAKQKFIVQLLLSAVTVITVFFIDKENSLFCTLQVPFFRTIFLGSSILAKLFCFSLAMLAIIGTSNAVNLTDGLDGLATGITCMSSFGLLIVAIMSPTNPLAYDVSIVLATLVGISLAFLRYNCSPAQVFMGDTGSLLIGGILASCAVMLRAELFLIFLGGVFVAEAGSVILQVASCRLRKKRIFLCSPLHHHYEYKGIPETQVVARFWMAGLLCTVLGIVAALWR.

Transmembrane regions (helical) follow at residues 11 to 31, 67 to 87, 92 to 112, 128 to 148, 163 to 183, 198 to 218, 222 to 242, 251 to 271, 276 to 296, and 326 to 346; these read SLILFLVTVMGFAFLVGIFLG, TAGGVLFFLVLLMSIFFLLPL, TWLFVFSIVSWGSLGWYDDIV, FIVQLLLSAVTVITVFFIDKE, IFLGSSILAKLFCFSLAMLAI, GLATGITCMSSFGLLIVAIMS, PLAYDVSIVLATLVGISLAFL, VFMGDTGSLLIGGILASCAVM, LFLIFLGGVFVAEAGSVILQV, and VVARFWMAGLLCTVLGIVAAL.

It belongs to the glycosyltransferase 4 family. MraY subfamily. Requires Mg(2+) as cofactor.

It is found in the cell inner membrane. The enzyme catalyses UDP-N-acetyl-alpha-D-muramoyl-L-alanyl-gamma-D-glutamyl-meso-2,6-diaminopimeloyl-D-alanyl-D-alanine + di-trans,octa-cis-undecaprenyl phosphate = di-trans,octa-cis-undecaprenyl diphospho-N-acetyl-alpha-D-muramoyl-L-alanyl-D-glutamyl-meso-2,6-diaminopimeloyl-D-alanyl-D-alanine + UMP. It functions in the pathway cell wall biogenesis; peptidoglycan biosynthesis. Catalyzes the initial step of the lipid cycle reactions in the biosynthesis of the cell wall peptidoglycan: transfers peptidoglycan precursor phospho-MurNAc-pentapeptide from UDP-MurNAc-pentapeptide onto the lipid carrier undecaprenyl phosphate, yielding undecaprenyl-pyrophosphoryl-MurNAc-pentapeptide, known as lipid I. This chain is Phospho-N-acetylmuramoyl-pentapeptide-transferase, found in Chlamydia felis (strain Fe/C-56) (Chlamydophila felis).